Reading from the N-terminus, the 1401-residue chain is DNA-directed RNA polymerase subunit beta' (1401 aa).

Zn(2+) contacts are provided by Cys-71, Cys-73, Cys-86, and Cys-89. The Mg(2+) site is built by Asp-462, Asp-464, and Asp-466. Positions 810, 884, 891, and 894 each coordinate Zn(2+). A disordered region spans residues 1378-1401; it reads EKQATIVPSAPEPEPLALPTPEQS.

It belongs to the RNA polymerase beta' chain family. The RNAP catalytic core consists of 2 alpha, 1 beta, 1 beta' and 1 omega subunit. When a sigma factor is associated with the core the holoenzyme is formed, which can initiate transcription. Mg(2+) is required as a cofactor. It depends on Zn(2+) as a cofactor.

The catalysed reaction is RNA(n) + a ribonucleoside 5'-triphosphate = RNA(n+1) + diphosphate. Its function is as follows. DNA-dependent RNA polymerase catalyzes the transcription of DNA into RNA using the four ribonucleoside triphosphates as substrates. This chain is DNA-directed RNA polymerase subunit beta', found in Rhodopseudomonas palustris (strain BisB18).